The primary structure comprises 418 residues: MSGLKQELGLAQGIGLLSTSLLGTGVFAVPALAALVAGNNSLWAWPVLIILVFPIAIVFAILGRHYPSAGGVAHFVGMAFGSRLERVTGWLFLSVIPVGLPAALQIAAGFGQAMFGWHSWQLLLAELGTLALVWYIGTRGASSSANLQTVIAGLIVALIVAIWWAGDIKPANIPFPAPGNIELTGLFAALSVMFWCFVGLEAFAHLASEFKNPERDFPRALMIGLLLAGLVYWGCTVVVLHFDAYGEKMAAAASLPKIVVQLFGVGALWIACVIGYLACFASLNIYIQSFARLVWSQAQHNPDHYLARLSSRHIPNNALNAVLGCCVVSTLVIHALEINLDALIIYANGIFIMIYLLCMLAGCKLLQGRYRLLAVVGGLLCVLLLAMVGWKSLYALIMLAGLWLLLPKRKTPENGITT.

Residues 1-15 (MSGLKQELGLAQGIG) are Periplasmic-facing. Residues 16 to 36 (LLSTSLLGTGVFAVPALAALV) form a helical membrane-spanning segment. Over 37–41 (AGNNS) the chain is Cytoplasmic. A helical membrane pass occupies residues 42 to 62 (LWAWPVLIILVFPIAIVFAIL). The Periplasmic portion of the chain corresponds to 63 to 89 (GRHYPSAGGVAHFVGMAFGSRLERVTG). A helical transmembrane segment spans residues 90–110 (WLFLSVIPVGLPAALQIAAGF). Over 111-113 (GQA) the chain is Cytoplasmic. A helical membrane pass occupies residues 114 to 134 (MFGWHSWQLLLAELGTLALVW). The Periplasmic portion of the chain corresponds to 135-147 (YIGTRGASSSANL). A helical transmembrane segment spans residues 148-168 (QTVIAGLIVALIVAIWWAGDI). Residues 169-182 (KPANIPFPAPGNIE) are Cytoplasmic-facing. A helical transmembrane segment spans residues 183–203 (LTGLFAALSVMFWCFVGLEAF). At 204-219 (AHLASEFKNPERDFPR) the chain is on the periplasmic side. Residues 220–240 (ALMIGLLLAGLVYWGCTVVVL) traverse the membrane as a helical segment. Over 241-257 (HFDAYGEKMAAAASLPK) the chain is Cytoplasmic. Residues 258 to 278 (IVVQLFGVGALWIACVIGYLA) traverse the membrane as a helical segment. Residues 279-317 (CFASLNIYIQSFARLVWSQAQHNPDHYLARLSSRHIPNN) are Periplasmic-facing. Residues 318-338 (ALNAVLGCCVVSTLVIHALEI) traverse the membrane as a helical segment. At 339–341 (NLD) the chain is on the cytoplasmic side. Residues 342-362 (ALIIYANGIFIMIYLLCMLAG) form a helical membrane-spanning segment. Residues 363-378 (CKLLQGRYRLLAVVGG) are Periplasmic-facing. Residues 379–399 (LLCVLLLAMVGWKSLYALIML) form a helical membrane-spanning segment. Topologically, residues 400-418 (AGLWLLLPKRKTPENGITT) are cytoplasmic.

This sequence belongs to the amino acid-polyamine-organocation (APC) superfamily. Amino acid efflux (AAE) (TC 2.A.3.13) family.

The protein localises to the cell inner membrane. The enzyme catalyses L-methionine(in) + H(+)(out) = L-methionine(out) + H(+)(in). It carries out the reaction L-leucine(in) + H(+)(out) = L-leucine(out) + H(+)(in). The catalysed reaction is L-isoleucine(in) + H(+)(out) = L-isoleucine(out) + H(+)(in). It catalyses the reaction L-valine(in) + H(+)(out) = L-valine(out) + H(+)(in). Its activity is regulated as follows. Efflux of L-methionine is inhibited by the proton ionophore carbonyl cyanide m-chlorophenylhydrazone (CCCP). Catalyzes the efflux of L-methionine, L-leucine, L-isoleucine and L-valine. Activity is dependent on electrochemical potential. The polypeptide is L-methionine/branched-chain amino acid exporter YjeH (yjeH) (Escherichia coli (strain K12)).